Reading from the N-terminus, the 257-residue chain is Imidazole glycerol phosphate synthase subunit HisF (257 aa).

Catalysis depends on residues Asp-12 and Asp-131.

This sequence belongs to the HisA/HisF family. Heterodimer of HisH and HisF.

The protein localises to the cytoplasm. The catalysed reaction is 5-[(5-phospho-1-deoxy-D-ribulos-1-ylimino)methylamino]-1-(5-phospho-beta-D-ribosyl)imidazole-4-carboxamide + L-glutamine = D-erythro-1-(imidazol-4-yl)glycerol 3-phosphate + 5-amino-1-(5-phospho-beta-D-ribosyl)imidazole-4-carboxamide + L-glutamate + H(+). The protein operates within amino-acid biosynthesis; L-histidine biosynthesis; L-histidine from 5-phospho-alpha-D-ribose 1-diphosphate: step 5/9. Functionally, IGPS catalyzes the conversion of PRFAR and glutamine to IGP, AICAR and glutamate. The HisF subunit catalyzes the cyclization activity that produces IGP and AICAR from PRFAR using the ammonia provided by the HisH subunit. This Rhodococcus jostii (strain RHA1) protein is Imidazole glycerol phosphate synthase subunit HisF.